A 248-amino-acid polypeptide reads, in one-letter code: 2,3-bisphosphoglycerate-dependent phosphoglycerate mutase (248 aa).

Substrate-binding positions include 8–15 (RHGESTWN), 21–22 (TG), Arg60, 87–90 (ERHY), Lys98, and 114–115 (RR). The active-site Tele-phosphohistidine intermediate is the His9. Residue Glu87 is the Proton donor/acceptor of the active site. Residues 118-137 (DTPPPALEPTDPRASYDDPR) are disordered. The span at 127-137 (TDPRASYDDPR) shows a compositional bias: basic and acidic residues. Residue 183–184 (GN) participates in substrate binding.

This sequence belongs to the phosphoglycerate mutase family. BPG-dependent PGAM subfamily. Homodimer.

It catalyses the reaction (2R)-2-phosphoglycerate = (2R)-3-phosphoglycerate. Its pathway is carbohydrate degradation; glycolysis; pyruvate from D-glyceraldehyde 3-phosphate: step 3/5. Functionally, catalyzes the interconversion of 2-phosphoglycerate and 3-phosphoglycerate. This is 2,3-bisphosphoglycerate-dependent phosphoglycerate mutase from Cupriavidus necator (strain ATCC 17699 / DSM 428 / KCTC 22496 / NCIMB 10442 / H16 / Stanier 337) (Ralstonia eutropha).